The primary structure comprises 1256 residues: Bifunctional autolysin (1256 aa).

Residues 1 to 29 (MAKKFNYKLPSMVALTLVGSAVTAHQVQA) form the signal peptide. Residues 103 to 138 (GDTRANQSATTNNTQPVAKSTSTTAPKTNTNVTNAG) show a composition bias toward polar residues. Disordered stretches follow at residues 103–151 (GDTR…NSEN), 172–214 (KTAA…KTSL), and 419–440 (TQST…PSTG). Composition is skewed to low complexity over residues 172–196 (KTAA…KVTT) and 421–439 (STTT…KPST). An N-acetylmuramoyl-L-alanine amidase region spans residues 199–775 (ASAQPRSVAA…AVAQPKTAVK (577 aa)). GW domains lie at 443–517 (TVAA…YNTA), 519–593 (SPVN…DTAK), 612–686 (TVSS…YNNA), 688–762 (SPVN…VPAA), 784–859 (TTQT…VQNL), 861–936 (KEVK…APTA), and 943–1017 (AAKD…KELI). The interval 776 to 1256 (AYTVTKPQTT…GKYFDIPQYK (481 aa)) is endo-beta-N-acetylglucosaminidase.

The protein in the N-terminal section; belongs to the N-acetylmuramoyl-L-alanine amidase 2 family. It in the C-terminal section; belongs to the glycosyl hydrolase 73 family. As to quaternary structure, oligomer; forms a ring structure at the cell surface which is important for efficient partitioning of daughter cells after cell division. Undergoes proteolytic processing to generate the two extracellular lytic enzymes, probably at the septal region on the cell surface.

Its subcellular location is the secreted. The catalysed reaction is Hydrolyzes the link between N-acetylmuramoyl residues and L-amino acid residues in certain cell-wall glycopeptides.. The enzyme catalyses an N(4)-(oligosaccharide-(1-&gt;3)-[oligosaccharide-(1-&gt;6)]-beta-D-Man-(1-&gt;4)-beta-D-GlcNAc-(1-&gt;4)-alpha-D-GlcNAc)-L-asparaginyl-[protein] + H2O = an oligosaccharide-(1-&gt;3)-[oligosaccharide-(1-&gt;6)]-beta-D-Man-(1-&gt;4)-D-GlcNAc + N(4)-(N-acetyl-beta-D-glucosaminyl)-L-asparaginyl-[protein]. Functionally, endohydrolysis of the di-N-acetylchitobiosyl unit in high-mannose glycopeptides and glycoproteins containing the -[(Man)5(GlcNAc)2]-Asn structure. One N-acetyl-D-glucosamine residue remains attached to the protein; the rest of the oligosaccharide is released intact. Cleaves the peptidoglycan connecting the daughter cells at the end of the cell division cycle, resulting in the separation of the two newly divided cells. Acts as an autolysin in penicillin-induced lysis. This chain is Bifunctional autolysin (atl), found in Staphylococcus aureus (strain NCTC 8325 / PS 47).